A 222-amino-acid polypeptide reads, in one-letter code: 3-dehydroquinate dehydratase (222 aa).

3-dehydroquinate-binding positions include 29 to 31 (ELR) and Arg-55. His-112 acts as the Proton donor/acceptor in catalysis. Lys-139 serves as the catalytic Schiff-base intermediate with substrate. Residues Arg-178, Ser-199, and Gln-203 each contribute to the 3-dehydroquinate site.

This sequence belongs to the type-I 3-dehydroquinase family. As to quaternary structure, homodimer.

It catalyses the reaction 3-dehydroquinate = 3-dehydroshikimate + H2O. It functions in the pathway metabolic intermediate biosynthesis; chorismate biosynthesis; chorismate from D-erythrose 4-phosphate and phosphoenolpyruvate: step 3/7. In terms of biological role, involved in the third step of the chorismate pathway, which leads to the biosynthesis of aromatic amino acids. Catalyzes the cis-dehydration of 3-dehydroquinate (DHQ) and introduces the first double bond of the aromatic ring to yield 3-dehydroshikimate. This chain is 3-dehydroquinate dehydratase, found in Dehalococcoides mccartyi (strain ATCC BAA-2266 / KCTC 15142 / 195) (Dehalococcoides ethenogenes (strain 195)).